The sequence spans 359 residues: F-box/kelch-repeat protein At1g15670 (359 aa).

Residues 2–49 (ELIPDLPETVAYECLLRSSYKQFPLMASVCKLWQREISLSDFFRHRKA) form the F-box domain. Kelch repeat units lie at residues 119–167 (DLVV…ASDS), 170–217 (NVFV…FHAG), 219–269 (FHVI…CAAG), 271–310 (NGDLYACCRRDLMMMKDDTWYKVGNLPADVCNVSYVAIRR), and 313–358 (NLVV…CFLE).

The sequence is that of F-box/kelch-repeat protein At1g15670 from Arabidopsis thaliana (Mouse-ear cress).